The chain runs to 256 residues: Thiazole synthase (256 aa).

The active-site Schiff-base intermediate with DXP is the lysine 96. Residues glycine 157, 183–184 (AG), and 205–206 (NT) each bind 1-deoxy-D-xylulose 5-phosphate.

It belongs to the ThiG family. Homotetramer. Forms heterodimers with either ThiH or ThiS.

The protein localises to the cytoplasm. The catalysed reaction is [ThiS sulfur-carrier protein]-C-terminal-Gly-aminoethanethioate + 2-iminoacetate + 1-deoxy-D-xylulose 5-phosphate = [ThiS sulfur-carrier protein]-C-terminal Gly-Gly + 2-[(2R,5Z)-2-carboxy-4-methylthiazol-5(2H)-ylidene]ethyl phosphate + 2 H2O + H(+). Its pathway is cofactor biosynthesis; thiamine diphosphate biosynthesis. Its function is as follows. Catalyzes the rearrangement of 1-deoxy-D-xylulose 5-phosphate (DXP) to produce the thiazole phosphate moiety of thiamine. Sulfur is provided by the thiocarboxylate moiety of the carrier protein ThiS. In vitro, sulfur can be provided by H(2)S. The polypeptide is Thiazole synthase (Bacillus anthracis).